We begin with the raw amino-acid sequence, 261 residues long: Undecaprenyl-diphosphatase (261 aa).

8 helical membrane-spanning segments follow: residues 1 to 21 (MTVL…FLPI), 40 to 60 (GLTF…AYFW), 79 to 99 (GRLF…GVLF), 106 to 126 (IFRS…GLWW), 140 to 160 (VNLF…IPGV), 185 to 205 (FLMS…ELPL), 210 to 230 (LAFI…IKFL), and 239 to 259 (YLLF…VFWL).

Belongs to the UppP family.

The protein localises to the cell membrane. The catalysed reaction is di-trans,octa-cis-undecaprenyl diphosphate + H2O = di-trans,octa-cis-undecaprenyl phosphate + phosphate + H(+). In terms of biological role, catalyzes the dephosphorylation of undecaprenyl diphosphate (UPP). Confers resistance to bacitracin. The sequence is that of Undecaprenyl-diphosphatase from Moorella thermoacetica (strain ATCC 39073 / JCM 9320).